We begin with the raw amino-acid sequence, 91 residues long: Protein sigN139 (91 aa).

Residues Asn23 and Asn34 are each glycosylated (N-linked (GlcNAc...) asparagine). Residues 46-68 (LLPVVAFISGTVTSITGLVAGAL) traverse the membrane as a helical segment.

The protein localises to the membrane. The protein is Protein sigN139 of Dictyostelium discoideum (Social amoeba).